The primary structure comprises 122 residues: UPF0102 protein Ping_1176 (122 aa).

Belongs to the UPF0102 family.

The protein is UPF0102 protein Ping_1176 of Psychromonas ingrahamii (strain DSM 17664 / CCUG 51855 / 37).